A 278-amino-acid chain; its full sequence is uncharacterized protein (278 aa).

A signal peptide spans 1-32; sequence MSSASFTTKALSVLAALTAASAPLVAASPAHA. Residues 33-236 form the Peptidase S1 domain; sequence LANARNVTGS…HAEWIAYYTG (204 aa). A disulfide bridge connects residues C59 and C75. Residues H74, D123, and S189 each act as charge relay system in the active site.

Belongs to the peptidase S1 family.

It is found in the secreted. This is an uncharacterized protein from Corynebacterium glutamicum (strain R).